Consider the following 548-residue polypeptide: (S)-beta-macrocarpene synthase (548 aa).

Residues D302 and D306 each coordinate Mg(2+). Substrate-binding residues include D302, D306, R443, and N446. A DDXXD motif motif is present at residues 302–306 (DDTLD). Residues N446, S450, and E454 each coordinate Mg(2+).

Belongs to the terpene synthase family. As to quaternary structure, monomer. Mg(2+) serves as cofactor. Mn(2+) is required as a cofactor. As to expression, expressed in roots. Not detected in leaves, unless damaged by herbivory or infected by fungi.

The protein localises to the cytoplasm. The enzyme catalyses (S)-beta-bisabolene = (S)-beta-macrocarpene. The catalysed reaction is (2E,6E)-farnesyl diphosphate = (S)-beta-bisabolene + diphosphate. It carries out the reaction (2E)-geranyl diphosphate = (4S)-limonene + diphosphate. It catalyses the reaction (2E)-geranyl diphosphate = beta-myrcene + diphosphate. The enzyme catalyses (2E)-geranyl diphosphate = terpinolene + diphosphate. The catalysed reaction is (2E)-geranyl diphosphate + H2O = (S)-linalool + diphosphate. It functions in the pathway secondary metabolite biosynthesis; terpenoid biosynthesis. In terms of biological role, involved in the biosynthesis of the bicyclic sesquiterpene (S)-beta-macrocarpene. Can use both geranyl diphosphate and farnesyl diphosphate as substrate, but not geranylgeranyl diphosphate. Produces mainly (S)-beta-macrocarpene, but also smaller amounts of beta-bisabolene and (E)-beta-farnesene when used with farnesyl diphosphate as substrate. In the presence of geranyl diphosphate, produces the acyclic monoterpenes beta-myrcene and linalool along with minor amounts of the cyclic compounds limonene, alpha-thujene, sabinene and alpha-terpinolene. May be involved in plant defense. The chain is (S)-beta-macrocarpene synthase from Zea mays (Maize).